The primary structure comprises 467 residues: Glutamate--tRNA ligase (467 aa).

The 'HIGH' region motif lies at 9-19 (PSPTGYLHIGG). The 'KMSKS' region motif lies at 237-241 (KLSKR). Lys240 lines the ATP pocket.

Belongs to the class-I aminoacyl-tRNA synthetase family. Glutamate--tRNA ligase type 1 subfamily. In terms of assembly, monomer.

It is found in the cytoplasm. The enzyme catalyses tRNA(Glu) + L-glutamate + ATP = L-glutamyl-tRNA(Glu) + AMP + diphosphate. Catalyzes the attachment of glutamate to tRNA(Glu) in a two-step reaction: glutamate is first activated by ATP to form Glu-AMP and then transferred to the acceptor end of tRNA(Glu). This is Glutamate--tRNA ligase from Xanthomonas axonopodis pv. citri (strain 306).